The chain runs to 557 residues: Protein Red (557 aa).

The tract at residues 1 to 90 (MPERDSEPFS…YAKLRQQEIE (90 aa)) is disordered. Residues 16-25 (DGHDVDDPHS) are compositionally biased toward basic and acidic residues. Low complexity predominate over residues 42-53 (TPRAAPTSAPPS). An N6-acetyllysine mark is found at Lys98 and Lys137. Lys151 participates in a covalent cross-link: Glycyl lysine isopeptide (Lys-Gly) (interchain with G-Cter in SUMO2). A disordered region spans residues 181 to 205 (KEKEEEELMEKPQKETKKDEDPENK). The residue at position 287 (Ser287) is a Phosphoserine. The span at 294–303 (RNKKLKKKDK) shows a compositional bias: basic residues. Residues 294–402 (RNKKLKKKDK…PMDVDKGPGS (109 aa)) are disordered. The span at 304–313 (GKLEEKKPPE) shows a compositional bias: basic and acidic residues. Glycyl lysine isopeptide (Lys-Gly) (interchain with G-Cter in SUMO2) cross-links involve residues Lys310 and Lys331. Residues 332 to 398 (TPRDKERERY…VDDEPMDVDK (67 aa)) show a composition bias toward basic and acidic residues. 17 tandem repeats follow at residues 342–343 (RE), 344–345 (RE), 346–347 (RD), 348–349 (RE), 350–351 (RD), 352–353 (RD), 354–355 (RE), 356–357 (RD), 358–359 (RE), 360–361 (RD), 362–363 (RE), 364–365 (RE), 366–367 (RE), 368–369 (RD), 370–371 (RE), 372–373 (RE), and 374–375 (RE). Residues 342–375 (RERERDRERDRDRERDRERDRERERERDRERERE) form a 17 X 2 AA tandem repeats of R-[ED] region. Residues Lys386, Lys388, Lys404, and Lys408 each participate in a glycyl lysine isopeptide (Lys-Gly) (interchain with G-Cter in SUMO2) cross-link. Ser417 and Ser460 each carry phosphoserine. Thr485 is modified (phosphothreonine). Glycyl lysine isopeptide (Lys-Gly) (interchain with G-Cter in SUMO2) cross-links involve residues Lys496, Lys501, and Lys509. The residue at position 536 (Ser536) is a Phosphoserine. Residues Lys541, Lys543, Lys544, and Lys553 each participate in a glycyl lysine isopeptide (Lys-Gly) (interchain with G-Cter in SUMO2) cross-link.

The protein belongs to the RED family. In terms of assembly, component of the spliceosome B complex. Interacts with SMU1. Interacts with MAD1L1. May interact with DHX15.

It is found in the nucleus. The protein resides in the nucleoplasm. The protein localises to the chromosome. Its subcellular location is the cytoplasm. It localises to the cytoskeleton. It is found in the spindle pole. Involved in pre-mRNA splicing as a component of the spliceosome. Auxiliary spliceosomal protein that regulates selection of alternative splice sites in a small set of target pre-mRNA species. Required for normal mitotic cell cycle progression. Recruits MAD1L1 and MAD2L1 to kinetochores, and is required to trigger the spindle assembly checkpoint. Required for normal accumulation of SMU1. This chain is Protein Red (Ik), found in Rattus norvegicus (Rat).